The chain runs to 237 residues: MNIFDRKINFDALLKFSHITPSTQQHLKKVYASFALCMFVAAAGAYVHVVTHFIQAGLLSALGSLALMIWLMATPHSHETEQKRLGLLAGFAFLTGVGLGPALELCIAVNPSILPTAFMGTAMIFTCFSLSALYARRRSYLFLGGILMSAMSLMLLSSLGNLFFGSIWLFQANLYLGLLVMCGFVLFDTQLIIEKAEHGDKDYIWHCVDLFLDFVTLFRKLMLILAFNEKDKKKEKK.

The Cytoplasmic segment spans residues Met-1 to Lys-29. Lys-7 is covalently cross-linked (Glycyl lysine isopeptide (Lys-Gly) (interchain with G-Cter in ubiquitin)). A helical membrane pass occupies residues Val-30–Val-50. Over Thr-51–His-52 the chain is Lumenal. A helical transmembrane segment spans residues Phe-53–Ala-73. Residues Thr-74–Gly-86 are Cytoplasmic-facing. A helical membrane pass occupies residues Leu-87–Ile-107. Residues Ala-108 to Ser-112 lie on the Lumenal side of the membrane. The chain crosses the membrane as a helical span at residues Ile-113–Leu-133. Topologically, residues Tyr-134–Ser-139 are cytoplasmic. A helical transmembrane segment spans residues Tyr-140 to Gly-160. The Lumenal portion of the chain corresponds to Asn-161–Ser-166. Residues Ile-167–Phe-187 traverse the membrane as a helical segment. The Cytoplasmic portion of the chain corresponds to Asp-188–His-206. The segment at residues Cys-207–Phe-227 is an intramembrane region (helical). Topologically, residues Asn-228–Lys-237 are cytoplasmic.

The protein belongs to the BI1 family. In terms of assembly, interacts with BCL2. Interacts with BCL2L1. Interacts with ERN1. Post-translationally, ubiquitinated by BFAR, leading to proteasomal degradation. As to expression, highly abundant in adult testis.

The protein resides in the endoplasmic reticulum membrane. Its function is as follows. Endoplasmic reticulum (ER)-resident protein that confers cellular protection as an anti-apoptotic protein by limiting multiple stress-inducing pathways surrounding the endoplasmic reticulum and mitochondria. Inhibits the activities of the key sensor for the endoplasmic reticulum unfolded protein response IRE1alpha/ERN1 both directly and by blocking BAX/BAK binding. Modulates ER calcium homeostasis by acting as a calcium-leak channel. Negatively regulates autophagy and autophagosome formation, especially during periods of nutrient deprivation, and reduces cell survival during starvation. The protein is Bax inhibitor 1 (Tmbim6) of Mus musculus (Mouse).